We begin with the raw amino-acid sequence, 331 residues long: Isopenicillin N synthase (331 aa).

Isopenicillin N is bound by residues R87, Y91, S183, and Y189. The N-[(5S)-5-amino-5-carboxypentanoyl]-L-cysteinyl-D-valine site is built by R87, Y91, S183, Y189, H214, and D216. Residues 176–288 (KKEDALSSVV…RQSLPFFVNL (113 aa)) enclose the Fe2OG dioxygenase domain. Fe(2+) contacts are provided by H214, D216, and H270. A 2-oxoglutarate-binding site is contributed by R279. S281 is a binding site for isopenicillin N. Residue S281 participates in N-[(5S)-5-amino-5-carboxypentanoyl]-L-cysteinyl-D-valine binding.

This sequence belongs to the iron/ascorbate-dependent oxidoreductase family. In terms of assembly, monomer. Fe(2+) is required as a cofactor.

Its subcellular location is the cytoplasm. It localises to the cytosol. The catalysed reaction is N-[(5S)-5-amino-5-carboxypentanoyl]-L-cysteinyl-D-valine + O2 = isopenicillin N + 2 H2O. Its pathway is antibiotic biosynthesis; penicillin G biosynthesis; penicillin G from L-alpha-aminoadipate and L-cysteine and L-valine: step 2/3. In terms of biological role, isopenicillin N synthase; part of the gene cluster that mediates the biosynthesis of penicillin, the world's most important antibiotic. IpnA catalyzes the cyclization of the tripeptide N-[(5S)-5-amino-5-carboxypentanoyl]-L-cysteinyl-D-valine (LLD-ACV or ACV) to form isopenicillin N (IPN) that contains the beta-lactam nucleus. The penicillin biosynthesis occurs via 3 enzymatic steps, the first corresponding to the production of the tripeptide N-[(5S)-5-amino-5-carboxypentanoyl]-L-cysteinyl-D-valine (LLD-ACV or ACV) by the NRPS acvA. The tripeptide ACV is then cyclized to isopenicillin N (IPN) by the isopenicillin N synthase ipnA that forms the beta-lactam nucleus. Finally, the alpha-aminoadipyl side chain is exchanged for phenylacetic acid by the isopenicillin N acyltransferase aatA to yield penicillin in the peroxisomal matrix. This chain is Isopenicillin N synthase, found in Penicillium chrysogenum (Penicillium notatum).